Reading from the N-terminus, the 121-residue chain is Small ribosomal subunit protein uS13 (121 aa).

A disordered region spans residues 93 to 121; the sequence is RGLPVRGQNTKNNARTRKGPRRTVANKKK. The segment covering 106 to 121 has biased composition (basic residues); the sequence is ARTRKGPRRTVANKKK.

The protein belongs to the universal ribosomal protein uS13 family. Part of the 30S ribosomal subunit. Forms a loose heterodimer with protein S19. Forms two bridges to the 50S subunit in the 70S ribosome.

In terms of biological role, located at the top of the head of the 30S subunit, it contacts several helices of the 16S rRNA. In the 70S ribosome it contacts the 23S rRNA (bridge B1a) and protein L5 of the 50S subunit (bridge B1b), connecting the 2 subunits; these bridges are implicated in subunit movement. Contacts the tRNAs in the A and P-sites. In Bacillus licheniformis (strain ATCC 14580 / DSM 13 / JCM 2505 / CCUG 7422 / NBRC 12200 / NCIMB 9375 / NCTC 10341 / NRRL NRS-1264 / Gibson 46), this protein is Small ribosomal subunit protein uS13.